Consider the following 385-residue polypeptide: Acyl-CoA dehydrogenase IpdE1 (385 aa).

Residues 126–129 and serine 161 each bind FAD; that span reads QGYS. The active-site Proton acceptor is glutamate 244. FAD is bound at residue 364–366; that stretch reads SNE.

It belongs to the acyl-CoA dehydrogenase family. In terms of assembly, heterotetramer composed of 2 IpdE1 subunits and 2 IpdE2 subunits. FAD serves as cofactor.

The enzyme catalyses 3-[(3aS,4S,5R,7aS)-5-hydroxy-7a-methyl-1-oxo-octahydro-1H-inden-4-yl]propanoyl-CoA + A = (2E)-3-[(3aS,4S,5R,7aS)-5-hydroxy-7a-methyl-1-oxo-octahydro-1H-inden-4-yl]prop-2-enoyl-CoA + AH2. It functions in the pathway steroid metabolism; cholesterol degradation. In terms of biological role, involved in cholesterol degradation. Catalyzes the dehydrogenation of 5OH-HIP-CoA to 5OH-HIPE-CoA. Can also use octanoyl-CoA and dihydroferuloyl-CoA, with lower efficiency. Cannot use 3-oxo-4-pregnene-20-carboxyl-CoA (3-OPC-CoA). The protein is Acyl-CoA dehydrogenase IpdE1 of Mycobacterium tuberculosis (strain ATCC 25618 / H37Rv).